Consider the following 137-residue polypeptide: Dormancy-associated protein homolog 3 (137 aa).

Disordered regions lie at residues 1–55 (MGLL…DSLP) and 69–137 (KPPG…TYGM). Residues 32 to 43 (FRPSSGNDQSEA) show a composition bias toward polar residues. Residues 70-87 (PPGYQGSSAPASPAGSTP) are compositionally biased toward low complexity. A Phosphoserine modification is found at Ser-81. Positions 88-97 (PLSPFSPPLS) are enriched in pro residues. Over residues 104–118 (EPFRFRRRSTSDAFE) the composition is skewed to basic and acidic residues. Over residues 127-137 (GPRSSPPTYGM) the composition is skewed to polar residues.

The protein belongs to the DRM1/ARP family.

In Arabidopsis thaliana (Mouse-ear cress), this protein is Dormancy-associated protein homolog 3.